A 128-amino-acid polypeptide reads, in one-letter code: Large ribosomal subunit protein bL12 (128 aa).

The protein belongs to the bacterial ribosomal protein bL12 family. In terms of assembly, homodimer. Part of the ribosomal stalk of the 50S ribosomal subunit. Forms a multimeric L10(L12)X complex, where L10 forms an elongated spine to which 2 to 4 L12 dimers bind in a sequential fashion. Binds GTP-bound translation factors.

Functionally, forms part of the ribosomal stalk which helps the ribosome interact with GTP-bound translation factors. Is thus essential for accurate translation. The sequence is that of Large ribosomal subunit protein bL12 from Brachyspira hyodysenteriae (strain ATCC 49526 / WA1).